Consider the following 235-residue polypeptide: Glucosamine-6-phosphate deaminase (235 aa).

Asp62 acts as the Proton acceptor; for enolization step in catalysis. The active-site For ring-opening step is the Asn128. The active-site Proton acceptor; for ring-opening step is the His130. The active-site For ring-opening step is the Glu135.

The protein belongs to the glucosamine/galactosamine-6-phosphate isomerase family. NagB subfamily.

It catalyses the reaction alpha-D-glucosamine 6-phosphate + H2O = beta-D-fructose 6-phosphate + NH4(+). The protein operates within amino-sugar metabolism; N-acetylneuraminate degradation; D-fructose 6-phosphate from N-acetylneuraminate: step 5/5. In terms of biological role, catalyzes the reversible isomerization-deamination of glucosamine 6-phosphate (GlcN6P) to form fructose 6-phosphate (Fru6P) and ammonium ion. This is Glucosamine-6-phosphate deaminase from Streptococcus gordonii (strain Challis / ATCC 35105 / BCRC 15272 / CH1 / DL1 / V288).